The following is a 174-amino-acid chain: Thiol-disulfide oxidoreductase ResA (174 aa).

A helical; Signal-anchor for type II membrane protein membrane pass occupies residues 11 to 30; sequence TVILLLLLAALGYTIYANFF. One can recognise a Thioredoxin domain in the interval 36-174; sequence VAVGSTAPDF…IKQHLESIKP (139 aa). A disulfide bridge links cysteine 74 with cysteine 77.

Belongs to the thioredoxin family. ResA subfamily.

The protein resides in the cell membrane. It functions in the pathway protein modification; cytochrome c assembly. In terms of biological role, thiol-disulfide oxidoreductase which is required in disulfide reduction during c-type cytochrome synthesis. May accept reducing equivalents from CcdA, leading to breakage of disulfide bonds in apocytochrome c; following this reduction heme can be covalently attached. In Geobacillus thermodenitrificans (strain NG80-2), this protein is Thiol-disulfide oxidoreductase ResA.